A 286-amino-acid chain; its full sequence is MDAHVAFSGFPTLPSVSPSGPQPPSLAGDEPGREPEEVVGGGDSEPPAAPGPGRRRRRPLQRGKPPYSYIALIAMALAHAPGRRLTLAAIYRFITERFAFYRDSPRKWQNSIRHNLTLNDCFVKVPREPGNPGKGNYWTLDPAAADMFDNGSFLRRRKRFKRTELPAPPPPPFPYAPFPPAPAPAPAPPARLFRLDSLLGLQTEPPGPLAPEPPCCAAPDASFPPCAAAASPPLYSPAPERLGLPAPLPAEPLLALAGSAGALGPLGAGEAYLRQPGFPPGLERYL.

Residues 1-62 are disordered; sequence MDAHVAFSGF…GRRRRRPLQR (62 aa). Residues 64 to 158 constitute a DNA-binding region (fork-head); sequence KPPYSYIALI…DNGSFLRRRK (95 aa).

It localises to the nucleus. Its function is as follows. Transcription factor that controls lens epithelial cell growth through regulation of proliferation, apoptosis and cell cycle. During lens development, controls the ratio of the lens fiber cells to the cells of the anterior lens epithelium by regulating the rate of proliferation and differentiation. Controls lens vesicle closure and subsequent separation of the lens vesicle from ectoderm. Controls the expression of DNAJB1 in a pathway that is crucial for the development of the anterior segment of the eye. This chain is Forkhead box protein E3 (Foxe3), found in Rattus norvegicus (Rat).